The sequence spans 1697 residues: Phosphatidylinositol 3-kinase 3 (1697 aa).

Disordered regions lie at residues 57-91, 169-229, 244-279, 310-376, 398-428, and 440-504; these read RSIN…TQPC, INNN…DSSI, KTTE…ENEI, KKNN…NSVG, SWTS…SGSS, and DLLK…NNDE. Low complexity-rich tracts occupy residues 60–87, 170–196, and 212–222; these read NNNN…NNNN and NNNSNNNNNIN. Composition is skewed to low complexity over residues 312 to 374 and 398 to 408; these read NNNN…TTNS and SWTSSKPTSSS. Composition is skewed to polar residues over residues 409–428 and 444–456; these read IGFA…SGSS and SPSS…SDIF. Positions 457-503 are enriched in low complexity; the sequence is NENNNNNNNNNNNNNNNNNNNNNNNNNNNNNNNNEELINNNNNNNND. The PI3K-RBD domain maps to 737–823; the sequence is PEFFVIRVHL…KGEIDLTMVE (87 aa). The C2 PI3K-type domain occupies 888-1036; it reads VTENLQVRLL…QAIIIAFEFK (149 aa). The PIK helical domain occupies 1060–1238; sequence GNELPVVTME…RVLSSGFLRY (179 aa). One can recognise a PI3K/PI4K catalytic domain in the interval 1304–1581; that stretch reads IPEKCKSMDS…LIHESIGTLT (278 aa). Residues 1310-1316 form a G-loop region; the sequence is SMDSAKV. Residues 1447 to 1455 form a catalytic loop region; it reads GIGDRHNDN. The tract at residues 1466–1492 is activation loop; that stretch reads HIDFGHFLGNFKTFAGFQREKAPFVLT. The span at 1609–1625 shows a compositional bias: low complexity; the sequence is ASSLNLNKNKPSSQSKL. The segment at 1609–1697 is disordered; the sequence is ASSLNLNKNK…DTEKENSIDK (89 aa). 5 consecutive repeat copies span residues 1622–1626, 1627–1631, 1632–1636, 1642–1646, and 1647–1651. A 5 X 5 AA approximate repeats region spans residues 1622–1651; it reads QSKLDLSRSDLSRSDSSRSDSSRLDLSRSD. Composition is skewed to basic and acidic residues over residues 1626-1681 and 1688-1697; these read DLSR…DKDN and DTEKENSIDK. Residues 1659 to 1672 are 7 X 2 AA tandem repeats of K-E; the sequence is KEKEKEKEKEKEKE.

The protein belongs to the PI3/PI4-kinase family.

The enzyme catalyses a 1,2-diacyl-sn-glycero-3-phospho-(1D-myo-inositol) + ATP = a 1,2-diacyl-sn-glycero-3-phospho-(1D-myo-inositol-3-phosphate) + ADP + H(+). The protein is Phosphatidylinositol 3-kinase 3 (pikC) of Dictyostelium discoideum (Social amoeba).